The following is a 252-amino-acid chain: MEGIQHPIPRTVEEVFSDFRGRRAGLIKALSTDVQKFYHQCDPEKENLCLYGLPNETWEVNLPVEEVPPELPEPALGINFARDGMQEKDWISLVAVHSDSWLISVAFYFGARFGFGKNERKRLFQMINDLPTIFEVVTGNAKQSKDQSANHNSSRSKSSGGKPRHSESHTKASKMSPPPRKEDESGDEDEDDEQGAVCGACGDNYGGDEFWICCDACEKWFHGKCVKITPAKAEHIKHYKCPSCTTSKKMKA.

Residues 141 to 193 are disordered; sequence AKQSKDQSANHNSSRSKSSGGKPRHSESHTKASKMSPPPRKEDESGDEDEDDE. The segment covering 149–161 has biased composition (low complexity); that stretch reads ANHNSSRSKSSGG. Phosphoserine is present on serine 176. Positions 184 to 193 are enriched in acidic residues; it reads ESGDEDEDDE. A PHD-type zinc finger spans residues 195-247; the sequence is GAVCGACGDNYGGDEFWICCDACEKWFHGKCVKITPAKAEHIKHYKCPSCTTS.

It belongs to the Alfin family. Interacts with H3K4me3 and to a lesser extent with H3K4me2. In terms of tissue distribution, ubiquitously expressed.

It localises to the nucleus. Histone-binding component that specifically recognizes H3 tails trimethylated on 'Lys-4' (H3K4me3), which mark transcription start sites of virtually all active genes. The chain is PHD finger protein ALFIN-LIKE 7 (AL7) from Arabidopsis thaliana (Mouse-ear cress).